Here is a 167-residue protein sequence, read N- to C-terminus: RNA pyrophosphohydrolase (167 aa).

A Nudix hydrolase domain is found at 8 to 158 (PYRRNVGAML…KRDIYRTLVR (151 aa)). The Nudix box motif lies at 49–70 (GGIDADEDPEEAVLRELREEIG).

It belongs to the Nudix hydrolase family. RppH subfamily. It depends on a divalent metal cation as a cofactor.

In terms of biological role, accelerates the degradation of transcripts by removing pyrophosphate from the 5'-end of triphosphorylated RNA, leading to a more labile monophosphorylated state that can stimulate subsequent ribonuclease cleavage. The protein is RNA pyrophosphohydrolase of Gluconacetobacter diazotrophicus (strain ATCC 49037 / DSM 5601 / CCUG 37298 / CIP 103539 / LMG 7603 / PAl5).